The chain runs to 618 residues: Matrix metalloproteinase-24 (618 aa).

The signal sequence occupies residues 1 to 41 (MPRSRGGRAAPGQASRWSGWRAPGRLLPLLPALCCLAAAAG). The propeptide occupies 42–128 (AGKPAGADAP…HLSRRRRNKR (87 aa)). The Extracellular portion of the chain corresponds to 42–575 (AGKPAGADAP…IDDVPGSVNA (534 aa)). Positions 110 to 117 (PRCGVPDH) match the Cysteine switch motif. Residues cysteine 112 and histidine 255 each contribute to the Zn(2+) site. Residue glutamate 256 is part of the active site. Residues histidine 259 and histidine 265 each contribute to the Zn(2+) site. Residues 296–352 (QKIYGPPAEPLEPTRPLPTLPVRRIHSPSERKHERHPRPPRPPLGDRPSTPGAKPNI) are disordered. Over residues 302 to 314 (PAEPLEPTRPLPT) the composition is skewed to pro residues. Hemopexin repeat units follow at residues 350–398 (PNIC…WKGL), 399–444 (PARI…GSCL), 446–494 (REGI…KGIP), and 495–542 (QAPQ…WMGC). The cysteines at positions 353 and 542 are disulfide-linked. Residues 576–596 (VAVVVPCTLSLCLLVLLYTIF) form a helical membrane-spanning segment. At 597–618 (QFKNKAGPQPVTYYKRPVQEWV) the chain is on the cytoplasmic side. Residues 616–618 (EWV) carry the PDZ-binding motif.

The protein belongs to the peptidase M10A family. Interacts with GRIP1 and GRIP2. Interacts (via PDZ-binding motif) with APBA3 (via PDZ domain). The cofactor is Zn(2+). Ca(2+) is required as a cofactor. Post-translationally, cleaved by a furin endopeptidase in the trans-Golgi network. In terms of tissue distribution, mainly expressed in neuronal cells of both central and peripheral nervous systems. Expressed by CGRP-containing peptidergic nociceptors in dorsal root ganglia. Expressed in adult neural stem cell and ependymocytes. Expressed at low level in testis.

It is found in the cell membrane. It localises to the golgi apparatus. The protein resides in the trans-Golgi network membrane. The protein localises to the secreted. Its subcellular location is the extracellular space. It is found in the extracellular matrix. In terms of biological role, metalloprotease that mediates cleavage of N-cadherin (CDH2) and acts as a regulator of neuro-immune interactions and neural stem cell quiescence. Involved in cell-cell interactions between nociceptive neurites and mast cells, possibly by mediating cleavage of CDH2, thereby acting as a mediator of peripheral thermal nociception and inflammatory hyperalgesia. Key regulator of neural stem cells quiescence by mediating cleavage of CDH2, affecting CDH2-mediated anchorage of neural stem cells to ependymocytes in the adult subependymal zone, leading to modulate their quiescence. May play a role in axonal growth. Able to activate progelatinase A. May also be a proteoglycanase involved in degradation of proteoglycans, such as dermatan sulfate and chondroitin sulfate proteoglycans. Cleaves partially fibronectin, but not collagen type I, nor laminin. This Mus musculus (Mouse) protein is Matrix metalloproteinase-24 (Mmp24).